The primary structure comprises 519 residues: Nif-specific regulatory protein (519 aa).

In terms of domain architecture, Sigma-54 factor interaction spans 177-405 (IVGESPALKR…LDNCVQRTAT (229 aa)). ATP contacts are provided by residues 205–212 (GESGTGKE) and 268–277 (ANGGTLLLDE). The tract at residues 406–476 (LASSNTITSS…ATIEAAGLTE (71 aa)) is inter-domain linker. Cys419 and Cys424 together coordinate a divalent metal cation. The segment at 477–519 (RDRLIKAMERAGWVQAKAARILGKTPRQVGYALRRHRIDVKKE) is C-terminal DNA-binding domain. The H-T-H motif DNA-binding region spans 491 to 510 (QAKAARILGKTPRQVGYALR).

In terms of assembly, interacts with sigma-54.

Functionally, required for activation of most nif operons, which are directly involved in nitrogen fixation. This Rhizobium leguminosarum protein is Nif-specific regulatory protein (nifA).